The primary structure comprises 270 residues: Protein-ADP-ribose hydrolase (270 aa).

The Macro domain maps to 73 to 267 (VSVKDCQKTN…LYDTYLQKEN (195 aa)). D92, I93, and N106 together coordinate ADP-D-ribose. Zn(2+)-binding residues include C112, H117, and C119. ADP-D-ribose contacts are provided by C119, I120, D121, S212, T213, G214, E215, and F216.

It belongs to the MacroD-type family. Zn-Macro subfamily. Zn(2+) serves as cofactor.

The enzyme catalyses 4-O-(ADP-D-ribosyl)-L-aspartyl-[protein] + H2O = L-aspartyl-[protein] + ADP-D-ribose + H(+). In terms of biological role, ADP-ribosylhydrolase that specifically reverses the SirTM-mediated mono-ADP-ribosylation at an asparatate residue of GcvH-L, by releasing ADP-ribose from the target protein. May play a role in the regulation of the response to host-induced oxidative stress. This Streptococcus pyogenes serotype M1 protein is Protein-ADP-ribose hydrolase.